The sequence spans 201 residues: Cytochrome c4 (201 aa).

The first 20 residues, 1–20 (MNKLLVSLLLTLGLTGLAHA), serve as a signal peptide directing secretion. Heme c is bound by residues Cys34, Cys37, His38, Met77, Cys130, Cys133, His134, and Met178.

Post-translationally, binds 2 heme c groups covalently per subunit.

It is found in the periplasm. In terms of biological role, diheme, high potential cytochrome c believed to be an intermediate electron donor to terminal oxidation systems. This is Cytochrome c4 (cc4) from Pseudomonas aeruginosa (strain ATCC 15692 / DSM 22644 / CIP 104116 / JCM 14847 / LMG 12228 / 1C / PRS 101 / PAO1).